A 575-amino-acid chain; its full sequence is Transcription factor E3 (575 aa).

The residue at position 47 (Ser47) is a Phosphoserine; by MTOR. Positions 90–126 (ATLSASSSAGGSRTPAMSSSSSSRVLLRQQLMRAQAQ) are enriched in low complexity. The segment at 90 to 153 (ATLSASSSAG…SPAPASPAIS (64 aa)) is disordered. The segment covering 127–136 (EQERRERREQ) has biased composition (basic and acidic residues). Arg188 is subject to Asymmetric dimethylarginine. The disordered stretch occupies residues 211–246 (LASQALTPPPGPASAQPLPAPEAAHTTGPTGSAPNS). Residues 260-271 (EIDDVIDEIISL) are strong transcription activation domain. Ser321 bears the Phosphoserine; by MTOR mark. A Glycyl lysine isopeptide (Lys-Gly) (interchain with G-Cter in SUMO2) cross-link involves residue Lys339. Residues 346 to 399 (QKKDNHNLIERRRRFNINDRIKELGTLIPKSSDPEMRWNKGTILKASVDYIRKL) form the bHLH domain. Positions 356-359 (RRRR) match the Nuclear localization signal motif. Residues 409-430 (LESRQRSLEQANRSLQLRIQEL) are leucine-zipper. 2 disordered regions span residues 473–498 (GAATFHVGGGPAQNAPHQQPPAPPSD) and 534–575 (GGLS…EEES). The segment covering 539–575 (GALSPLRAASDPLLSSVSPAVSKASSRRSSFSMEEES) has biased composition (low complexity). Ser542, Ser548, Ser554, Ser556, Ser560, and Ser568 each carry phosphoserine.

It belongs to the MiT/TFE family. Homodimer and heterodimer; with TFEB or MITF. Interacts with RRAGC/RagC GDP-bound and RRAGD/RagD GDP-bound; promoting its recruitment to lysosomal membrane in the presence of nutrients. Interacts with TSC22D1; the interaction is enhanced in the presence of TGF-beta. In terms of processing, sumoylated; does not affect dimerization with MITF. Phosphorylation ar Ser-47 and Ser-321 by MTOR via non-canonical mTORC1 pathway regulates its stability and subcellular location, respectively. When nutrients are present, phosphorylation by MTOR at Ser-47 promotes ubiquitination by the SCF(BTRC) complex, followed by degradation. When nutrients are present, phosphorylation by MTOR at Ser-321 also promotes association with 14-3-3/YWHA adapters and retention in the cytosol. Phosphorylation at Ser-47 plays a more critical role than phosphorylation at Ser-321 for TFE3 inactivation. Inhibition of mTORC1, starvation and lysosomal disruption, promotes dephosphorylation and transcription factor activity. Post-translationally, ubiquitinated by the SCF(BTRC) and SCF(FBXW11) complexes following phosphorylation at Ser-47 by MTOR, leading to its degradation by the proteasome. In terms of tissue distribution, ubiquitous in fetal and adult tissues.

The protein localises to the cytoplasm. Its subcellular location is the cytosol. It localises to the nucleus. It is found in the lysosome membrane. Transcription factor that acts as a master regulator of lysosomal biogenesis and immune response. Specifically recognizes and binds E-box sequences (5'-CANNTG-3'); efficient DNA-binding requires dimerization with itself or with another MiT/TFE family member such as TFEB or MITF. Involved in the cellular response to amino acid availability by acting downstream of MTOR: in the presence of nutrients, TFE3 phosphorylation by MTOR promotes its inactivation. Upon starvation or lysosomal stress, inhibition of MTOR induces TFE3 dephosphorylation, resulting in transcription factor activity. Specifically recognizes and binds the CLEAR-box sequence (5'-GTCACGTGAC-3') present in the regulatory region of many lysosomal genes, leading to activate their expression, thereby playing a central role in expression of lysosomal genes. Maintains the pluripotent state of embryonic stem cells by promoting the expression of genes such as ESRRB; mTOR-dependent TFE3 cytosolic retention and inactivation promotes exit from pluripotency. Required to maintain the naive pluripotent state of hematopoietic stem cell; mTOR-dependent cytoplasmic retention of TFE3 promotes the exit of hematopoietic stem cell from pluripotency. TFE3 activity is also involved in the inhibition of neuronal progenitor differentiation. Acts as a positive regulator of browning of adipose tissue by promoting expression of target genes; mTOR-dependent phosphorylation promotes cytoplasmic retention of TFE3 and inhibits browning of adipose tissue. In association with TFEB, activates the expression of CD40L in T-cells, thereby playing a role in T-cell-dependent antibody responses in activated CD4(+) T-cells and thymus-dependent humoral immunity. Specifically recognizes the MUE3 box, a subset of E-boxes, present in the immunoglobulin enhancer. It also binds very well to a USF/MLTF site. Promotes TGF-beta-induced transcription of COL1A2; via its interaction with TSC22D1 at E-boxes in the gene proximal promoter. May regulate lysosomal positioning in response to nutrient deprivation by promoting the expression of PIP4P1. This Homo sapiens (Human) protein is Transcription factor E3.